Reading from the N-terminus, the 911-residue chain is MDGAMGPRGLLLCMYLVSLLILQAMPALGSATGRSKSSEKRQAVDTAVDGVFIRSLKVNCKVTSRFAHYVVTSQVVNTANEAREVAFDLEIPKTAFISDFAVTADGNAFIGDIKDKVTAWKQYRKAAISGENAGLVRASGRTMEQFTIHLTVNPQSKVTFQLTYEEVLKRNHMQYEIVIKVKPKQLVHHFEIDVDIFEPQGISKLDAQASFLPKELAAQTIKKSFSGKKGHVLFRPTVSQQQSCPTCSTSLLNGHFKVTYDVSRDKICDLLVANNHFAHFFAPQNLTNMNKNVVFVIDISGSMRGQKVKQTKEALLKILGDMQPGDYFDLVLFGTRVQSWKGSLVQASEANLQAAQDFVRGFSLDEATNLNGGLLRGIEILNQVQESLPELSNHASILIMLTDGDPTEGVTDRSQILKNVRNAIRGRFPLYNLGFGHNVDFNFLEVMSMENNGRAQRIYEDHDATQQLQGFYSQVAKPLLVDVDLQYPQDAVLALTQNHHKQYYEGSEIVVAGRIADNKQSSFKADVQAHGEGQEFSITCLVDEEEMKKLLRERGHMLENHVERLWAYLTIQELLAKRMKVDREERANLSSQALQMSLDYGFVTPLTSMSIRGMADQDGLKPTIDKPSEDSPPLEMLGPRRTFVLSALQPSPTHSSSNTQRLPDRVTGVDTDPHFIIHVPQKEDTLCFNINEEPGVILSLVQDPNTGFSVNGQLIGNKARSPGQHDGTYFGRLGIANPATDFQLEVTPQNITLNPGFGGPVFSWRDQAVLRQDGVVVTINKKRNLVVSVDDGGTFEVVLHRVWKGSSVHQDFLGFYVLDSHRMSARTHGLLGQFFHPIGFEVSDIHPGSDPTKPDATMVVRNRRLTVTRGLQKDYSKDPWHGAEVSCWFIHNNGAGLIDGAYTDYIVPDIF.

A signal peptide spans 1–27 (MDGAMGPRGLLLCMYLVSLLILQAMPA). Residues 28-34 (LGSATGR) constitute a propeptide that is removed on maturation. The 130-residue stretch at 37 to 166 (SSEKRQAVDT…KVTFQLTYEE (130 aa)) folds into the VIT domain. Cysteine 60 is a glycosylation site (S-linked (Hex...) cysteine). Serine 129 bears the Phosphoserine mark. The short motif at 181–184 (VKPK) is the Phagocytosis uptake signal element. Disulfide bonds link cysteine 244/cysteine 247 and cysteine 268/cysteine 540. An N-linked (GlcNAc...) (complex) asparagine glycan is attached at asparagine 285. The VWFA domain occupies 290 to 450 (NKNVVFVIDI…FNFLEVMSME (161 aa)). Residues 387–911 (SLPELSNHAS…YTDYIVPDIF (525 aa)) form a hyaluronan-binding region. A phosphothreonine mark is found at threonine 402 and threonine 407. Asparagine 588 is a glycosylation site (N-linked (GlcNAc...) (complex) asparagine). Threonine 653 is a glycosylation site (O-linked (GalNAc...) threonine). Aspartate 672 is subject to Aspartate 1-(chondroitin 4-sulfate)-ester. Residues 673-911 (PHFIIHVPQK…YTDYIVPDIF (239 aa)) constitute a propeptide that is removed on maturation. An N-linked (GlcNAc...) asparagine glycan is attached at asparagine 750.

The protein belongs to the ITIH family. As to quaternary structure, I-alpha-I plasma protease inhibitors are assembled from one or two heavy chains (HC) and one light chain, bikunin. Inter-alpha-inhibitor (I-alpha-I) is composed of ITIH1/HC1, ITIH2/HC2 and bikunin. Interacts with TNFAIP6 (via Link and CUB domains). Heavy chains are linked to bikunin via chondroitin 4-sulfate esterified to the alpha-carboxyl of the C-terminal aspartate after propeptide cleavage. In terms of processing, the S-linked glycan is composed of two 6-carbon sugars, possibly Glc or Gal.

It localises to the secreted. Functionally, may act as a carrier of hyaluronan in serum or as a binding protein between hyaluronan and other matrix protein, including those on cell surfaces in tissues to regulate the localization, synthesis and degradation of hyaluronan which are essential to cells undergoing biological processes. Contains a potential peptide which could stimulate a broad spectrum of phagocytotic cells. In Homo sapiens (Human), this protein is Inter-alpha-trypsin inhibitor heavy chain H1 (ITIH1).